Here is a 119-residue protein sequence, read N- to C-terminus: Holo-[acyl-carrier-protein] synthase (119 aa).

Mg(2+) is bound by residues Asp8 and Glu59.

This sequence belongs to the P-Pant transferase superfamily. AcpS family. The cofactor is Mg(2+).

Its subcellular location is the cytoplasm. The catalysed reaction is apo-[ACP] + CoA = holo-[ACP] + adenosine 3',5'-bisphosphate + H(+). In terms of biological role, transfers the 4'-phosphopantetheine moiety from coenzyme A to a Ser of acyl-carrier-protein. This is Holo-[acyl-carrier-protein] synthase from Staphylococcus aureus (strain JH1).